The chain runs to 187 residues: Protein GrpE (187 aa).

Residues 1–38 (MSEEKQTVEQNETEEQEIIEEQAAADEQQEETNESELL) form a disordered region. A compositionally biased stretch (acidic residues) spans 11–34 (NETEEQEIIEEQAAADEQQEETNE).

The protein belongs to the GrpE family. Homodimer.

Its subcellular location is the cytoplasm. Participates actively in the response to hyperosmotic and heat shock by preventing the aggregation of stress-denatured proteins, in association with DnaK and GrpE. It is the nucleotide exchange factor for DnaK and may function as a thermosensor. Unfolded proteins bind initially to DnaJ; upon interaction with the DnaJ-bound protein, DnaK hydrolyzes its bound ATP, resulting in the formation of a stable complex. GrpE releases ADP from DnaK; ATP binding to DnaK triggers the release of the substrate protein, thus completing the reaction cycle. Several rounds of ATP-dependent interactions between DnaJ, DnaK and GrpE are required for fully efficient folding. The sequence is that of Protein GrpE from Bacillus subtilis (strain 168).